The sequence spans 462 residues: Metacaspase-1 (462 aa).

The segment covering 1–21 (MSYYPPPSGYPGGPPAYPPPQ) has biased composition (pro residues). The tract at residues 1–150 (MSYYPPPSGY…PPPPSGSVAF (150 aa)) is disordered. The span at 22 to 33 (QQQQQQQQYPSY) shows a compositional bias: low complexity. Composition is skewed to pro residues over residues 49 to 69 (PSYP…PPHS) and 77 to 102 (SPQP…PPSP). Catalysis depends on residues histidine 253 and cysteine 309.

The protein belongs to the peptidase C14B family.

Its function is as follows. Involved in cell death (apoptosis). This chain is Metacaspase-1 (MCA1), found in Coccidioides immitis (strain RS) (Valley fever fungus).